A 131-amino-acid chain; its full sequence is Snaclec alboaggregin-A subunit alpha (131 aa).

Residues Asp1–Arg131 form the C-type lectin domain. Disulfide bonds link Cys2-Cys13, Cys30-Cys127, and Cys102-Cys119.

This sequence belongs to the snaclec family. As to quaternary structure, heterotetramer of the subunits alpha, alpha', beta and beta'; disulfide-linked. Expressed by the venom gland.

The protein localises to the secreted. Potent platelet activator that aggregates platelets via both GPIbalpha (GP1BA) and GPVI (GP6). Induces a tyrosine phosphorylation profile in platelets that resembles this produced by collagen, involving the time dependent tyrosine phosphorylation of Fc receptor gamma chain (FCGR1A), phospholipase Cgamma2 (PLCG2), and LAT. This is Snaclec alboaggregin-A subunit alpha from Trimeresurus albolabris (White-lipped pit viper).